A 256-amino-acid polypeptide reads, in one-letter code: Ribonuclease HII (256 aa).

The RNase H type-2 domain maps to 72-256 (QYVAGIDEVG…TFRPVPDYVN (185 aa)). Residues Asp78, Glu79, and Asp170 each contribute to the a divalent metal cation site.

The protein belongs to the RNase HII family. The cofactor is Mn(2+). It depends on Mg(2+) as a cofactor.

It is found in the cytoplasm. The enzyme catalyses Endonucleolytic cleavage to 5'-phosphomonoester.. In terms of biological role, endonuclease that specifically degrades the RNA of RNA-DNA hybrids. In Limosilactobacillus fermentum (strain NBRC 3956 / LMG 18251) (Lactobacillus fermentum), this protein is Ribonuclease HII.